Consider the following 316-residue polypeptide: Ribosomal RNA small subunit methyltransferase H (316 aa).

S-adenosyl-L-methionine is bound by residues 35–37 (GGH), Asp55, Phe79, Asp101, and Gln108.

This sequence belongs to the methyltransferase superfamily. RsmH family.

It is found in the cytoplasm. It carries out the reaction cytidine(1402) in 16S rRNA + S-adenosyl-L-methionine = N(4)-methylcytidine(1402) in 16S rRNA + S-adenosyl-L-homocysteine + H(+). In terms of biological role, specifically methylates the N4 position of cytidine in position 1402 (C1402) of 16S rRNA. This Aliivibrio fischeri (strain ATCC 700601 / ES114) (Vibrio fischeri) protein is Ribosomal RNA small subunit methyltransferase H.